An 87-amino-acid polypeptide reads, in one-letter code: Phosphocarrier protein HPr (87 aa).

The 86-residue stretch at 2-87 folds into the HPr domain; sequence ASKDFHIVAE…NETMTKEGLA (86 aa). Histidine 15 functions as the Pros-phosphohistidine intermediate in the catalytic mechanism. A Phosphoserine; by HPrK/P modification is found at serine 46.

The protein belongs to the HPr family.

It localises to the cytoplasm. With respect to regulation, phosphorylation on Ser-46 inhibits the phosphoryl transfer from enzyme I to HPr. Its function is as follows. General (non sugar-specific) component of the phosphoenolpyruvate-dependent sugar phosphotransferase system (sugar PTS). This major carbohydrate active-transport system catalyzes the phosphorylation of incoming sugar substrates concomitantly with their translocation across the cell membrane. The phosphoryl group from phosphoenolpyruvate (PEP) is transferred to the phosphoryl carrier protein HPr by enzyme I. Phospho-HPr then transfers it to the PTS EIIA domain. Functionally, P-Ser-HPr interacts with the catabolite control protein A (CcpA), forming a complex that binds to DNA at the catabolite response elements cre, operator sites preceding a large number of catabolite-regulated genes. Thus, P-Ser-HPr is a corepressor in carbon catabolite repression (CCR), a mechanism that allows bacteria to coordinate and optimize the utilization of available carbon sources. P-Ser-HPr also plays a role in inducer exclusion, in which it probably interacts with several non-PTS permeases and inhibits their transport activity. The polypeptide is Phosphocarrier protein HPr (ptsH) (Streptococcus mutans serotype c (strain ATCC 700610 / UA159)).